A 97-amino-acid polypeptide reads, in one-letter code: Putative septation protein SpoVG (97 aa).

It belongs to the SpoVG family.

Its function is as follows. Essential for sporulation. Interferes with or is a negative regulator of the pathway leading to asymmetric septation. The chain is Putative septation protein SpoVG from Bacillus cereus (strain 03BB102).